Here is a 418-residue protein sequence, read N- to C-terminus: Thyroid hormone receptor alpha-A (418 aa).

The interval 1 to 38 is disordered; sequence MDQNLSGLDCLSEPDEKRWPDGKRKRKNSQCMGKSGMS. Positions 1–60 are modulating; that stretch reads MDQNLSGLDCLSEPDEKRWPDGKRKRKNSQCMGKSGMSGDSLVSLPSAGYIPSYLDKDEP. 2 consecutive NR C4-type zinc fingers follow at residues 61–81 and 99–123; these read CVVC…CEGC and CKYD…FKKC. A DNA-binding region (nuclear receptor) is located at residues 61-135; that stretch reads CVVCSDKATG…VGMAMDLVLD (75 aa). Positions 171 to 415 constitute an NR LBD domain; the sequence is EEWELIRIVT…PPLFLEVFED (245 aa).

This sequence belongs to the nuclear hormone receptor family. NR1 subfamily. Binds to thyroid hormone receptor element (TRE) weakly as homodimers and monomers, but binds TRE with much higher affinity as heterodimers with retinoid X receptors. Can bind DNA as a heterodimer with either rxra or rxrg.

It is found in the nucleus. Its function is as follows. High affinity receptor for triiodothyronine (T3). This Xenopus laevis (African clawed frog) protein is Thyroid hormone receptor alpha-A (thra-a).